We begin with the raw amino-acid sequence, 392 residues long: Galactokinase (392 aa).

Alpha-D-galactose-binding residues include Arg37, Glu43, His44, and Asp46. The ATP site is built by Gly136, Gly138, Ser140, and Ser141. Position 186 (Asp186) interacts with alpha-D-galactose. The active-site Proton acceptor is the Asp186. The residue at position 230 (Ser230) is a Phosphoserine. Tyr236 is a binding site for alpha-D-galactose.

Belongs to the GHMP kinase family. GalK subfamily. In terms of assembly, homodimer.

The catalysed reaction is alpha-D-galactose + ATP = alpha-D-galactose 1-phosphate + ADP + H(+). Its pathway is carbohydrate metabolism; galactose metabolism. In terms of biological role, catalyzes the transfer of a phosphate from ATP to alpha-D-galactose and participates in the first committed step in the catabolism of galactose. This is Galactokinase (GALK1) from Canis lupus familiaris (Dog).